The sequence spans 277 residues: tRNA pseudouridine synthase A (277 aa).

The Nucleophile role is filled by aspartate 57. A substrate-binding site is contributed by tyrosine 115.

It belongs to the tRNA pseudouridine synthase TruA family. As to quaternary structure, homodimer.

The enzyme catalyses uridine(38/39/40) in tRNA = pseudouridine(38/39/40) in tRNA. In terms of biological role, formation of pseudouridine at positions 38, 39 and 40 in the anticodon stem and loop of transfer RNAs. The polypeptide is tRNA pseudouridine synthase A (Nitratidesulfovibrio vulgaris (strain DSM 19637 / Miyazaki F) (Desulfovibrio vulgaris)).